The sequence spans 1065 residues: DNA ligase 4 (1065 aa).

The interval 1 to 20 is disordered; it reads MAVHAPYNHAPPPTQEINGQ. The ATP site is built by Glu-295, Lys-297, Leu-298, Arg-302, Glu-357, Phe-387, Glu-452, Lys-457, Lys-474, and Lys-476. The active-site N6-AMP-lysine intermediate is Lys-297. Residue Glu-357 coordinates Mg(2+). Glu-452 lines the Mg(2+) pocket. The region spanning 696 to 775 is the BRCT 1 domain; sequence VETSIFSDMT…TALPFLKEFL (80 aa). Residues 825-928 are disordered; sequence GEDKDEIDVE…SDVGVNGDDY (104 aa). 2 stretches are compositionally biased toward basic and acidic residues: residues 834–864 and 886–900; these read EESRESKNRRMAREDLKEKESNRTLEQKKLQ and MSLKEESDTDSERSR. A BRCT 2 domain is found at 954–1064; that stretch reads DEDRIFYHLA…TLLDEDLYKP (111 aa).

Belongs to the ATP-dependent DNA ligase family. Mg(2+) is required as a cofactor.

Its subcellular location is the nucleus. The catalysed reaction is ATP + (deoxyribonucleotide)n-3'-hydroxyl + 5'-phospho-(deoxyribonucleotide)m = (deoxyribonucleotide)n+m + AMP + diphosphate.. Functionally, DNA ligase involved in DNA non-homologous end joining (NHEJ); required for double-strand break (DSB) repair. In Cryptococcus neoformans var. neoformans serotype D (strain B-3501A) (Filobasidiella neoformans), this protein is DNA ligase 4 (LIG4).